A 350-amino-acid chain; its full sequence is MSASPTAGQAGLSYRDAGVDIDAGDALVDRIKPFAKRTMREGVMAGIGGFGALFELSKKFQEPVLVSGTDGVGTKLKLAFQLNRHDTVGQDLVAMSVNDILVQGAEPLFFLDYFACGKLDVDTAATVIQGIARGCELAGCALIGGETAEMPSMYPDGEYDLAGFAVGAVEKKKIIDGSTITPGDVVLGLASSGAHSNGYSLVRKIIEVARPDLNADFHGQRLQDAIMAPTRIYVKPLLSLIETLPVKGMAHITGGGLTENVPRVLAQDVTAVLKRDAWTLPPLFQWLQAQGRVADDEMHRVFNCGIGMVVIVAKEDAERAIRHLQAAGEAVWQIGEIRERAEGEAQTIVV.

This sequence belongs to the AIR synthase family.

The protein localises to the cytoplasm. The catalysed reaction is 2-formamido-N(1)-(5-O-phospho-beta-D-ribosyl)acetamidine + ATP = 5-amino-1-(5-phospho-beta-D-ribosyl)imidazole + ADP + phosphate + H(+). The protein operates within purine metabolism; IMP biosynthesis via de novo pathway; 5-amino-1-(5-phospho-D-ribosyl)imidazole from N(2)-formyl-N(1)-(5-phospho-D-ribosyl)glycinamide: step 2/2. This is Phosphoribosylformylglycinamidine cyclo-ligase from Cupriavidus necator (strain ATCC 17699 / DSM 428 / KCTC 22496 / NCIMB 10442 / H16 / Stanier 337) (Ralstonia eutropha).